The sequence spans 555 residues: (+)-delta-cadinene synthase isozyme A (555 aa).

The tract at residues 1–22 is disordered; the sequence is MASQASQVLASPHPAISSENRP. Positions 308, 312, 452, and 456 each coordinate Mg(2+). The DDXXD motif motif lies at 308–312; sequence DDTYD.

The protein belongs to the terpene synthase family. Requires Mg(2+) as cofactor.

It carries out the reaction (2E,6E)-farnesyl diphosphate = (1S,8aR)-delta-cadinene + diphosphate. The protein operates within secondary metabolite biosynthesis; terpenoid biosynthesis. Functionally, responsible for the cyclization of trans,trans-farnesyl diphosphate (FPP) to (+)-delta cadinene. The sequence is that of (+)-delta-cadinene synthase isozyme A (CAD1-A) from Gossypium arboreum (Tree cotton).